Reading from the N-terminus, the 522-residue chain is Glycogen synthase (522 aa).

A disordered region spans residues 1 to 29 (MISAVLDTQGDHPQQQAGDRAAPSVPVPG). Lysine 58 is an ADP-alpha-D-glucose binding site.

It belongs to the glycosyltransferase 1 family. Bacterial/plant glycogen synthase subfamily.

The enzyme catalyses [(1-&gt;4)-alpha-D-glucosyl](n) + ADP-alpha-D-glucose = [(1-&gt;4)-alpha-D-glucosyl](n+1) + ADP + H(+). The protein operates within glycan biosynthesis; glycogen biosynthesis. Synthesizes alpha-1,4-glucan chains using ADP-glucose. This Pseudomonas fluorescens (strain ATCC BAA-477 / NRRL B-23932 / Pf-5) protein is Glycogen synthase.